The sequence spans 344 residues: N-acetyl-gamma-glutamyl-phosphate reductase (344 aa).

Cys149 is a catalytic residue.

This sequence belongs to the NAGSA dehydrogenase family. Type 1 subfamily.

It is found in the cytoplasm. The enzyme catalyses N-acetyl-L-glutamate 5-semialdehyde + phosphate + NADP(+) = N-acetyl-L-glutamyl 5-phosphate + NADPH + H(+). It participates in amino-acid biosynthesis; L-arginine biosynthesis; N(2)-acetyl-L-ornithine from L-glutamate: step 3/4. Its function is as follows. Catalyzes the NADPH-dependent reduction of N-acetyl-5-glutamyl phosphate to yield N-acetyl-L-glutamate 5-semialdehyde. This chain is N-acetyl-gamma-glutamyl-phosphate reductase, found in Thermoanaerobacter sp. (strain X514).